The sequence spans 172 residues: Protein-export protein SecB (172 aa).

It belongs to the SecB family. Homotetramer, a dimer of dimers. One homotetramer interacts with 1 SecA dimer.

The protein resides in the cytoplasm. One of the proteins required for the normal export of preproteins out of the cell cytoplasm. It is a molecular chaperone that binds to a subset of precursor proteins, maintaining them in a translocation-competent state. It also specifically binds to its receptor SecA. In Maricaulis maris (strain MCS10) (Caulobacter maris), this protein is Protein-export protein SecB.